Here is a 699-residue protein sequence, read N- to C-terminus: MPDLLLELRSEEIPARMQRRAAEDLKKLVTDALVARGFLYEGARAFSTPRRLALHIAGLPARGEAVREERRGPRVGAPEAAVQGFLKGAGLASLDQATTVTDPKKGEFYLAVIERPGRETLDVLAEFLPEIVRSFPWPKSMRWGAASAEPGSLRWVRPLQSIVATFGPETETPEVIPVSVGGIAAGTVTYGHRFLAPEAIEVRRFDDYIQALERAKVVLDADRRKDVILHDARDLAFARGLDLVEDEGLLEEVSGLVEWPVVLMGSFDESFLDIPAEAIRATIRANQKCFVLRKGGSEDLAPAFILVSNLVATDGGQAITAGNERVVRARLSDAKFFWETDKATRLEDRLPKLDAIVFHEKLGTQGERIARIAALAKDLAPRVGADPALAERAARLAKADLVTEMVGEFPELQGLMGRKYAALQGEHDSVCAAIEEHYKPLGPSDRVPTDPVSIAVALADKLDTLAGFWAIDEKPTGSKDPFALRRAALGVIRLILDRGLRLRLLEQVGAADRSLAGRAGADARDLLGFFADRLKVYLRDQGARHDLIDAVFALPGQDDLLMVVRRVEALAAFLDTEDGKNLLAGYKRAANILRIEEKKDGRAYDAAPDAALAAAGEPAERALAEALAKARETASAAVAREDFSGAMQALSTLRAPVDAFFQDVTVNAPDPKLRENRLALLNALRAATREVAEFAKIEG.

The protein belongs to the class-II aminoacyl-tRNA synthetase family. In terms of assembly, tetramer of two alpha and two beta subunits.

It is found in the cytoplasm. The catalysed reaction is tRNA(Gly) + glycine + ATP = glycyl-tRNA(Gly) + AMP + diphosphate. This is Glycine--tRNA ligase beta subunit from Methylobacterium radiotolerans (strain ATCC 27329 / DSM 1819 / JCM 2831 / NBRC 15690 / NCIMB 10815 / 0-1).